The sequence spans 372 residues: uncharacterized protein (372 aa).

Residues D202 and 227–229 (GDF) contribute to the S-adenosyl-L-methionine site.

This sequence belongs to the class I-like SAM-binding methyltransferase superfamily. Cation-independent O-methyltransferase family.

This is an uncharacterized protein from Methanocaldococcus jannaschii (strain ATCC 43067 / DSM 2661 / JAL-1 / JCM 10045 / NBRC 100440) (Methanococcus jannaschii).